The primary structure comprises 315 residues: Protoheme IX farnesyltransferase 1 (315 aa).

The next 8 helical transmembrane spans lie at 30–50, 56–76, 106–126, 132–152, 162–182, 186–206, 249–269, and 289–309; these read PGII…AWIQ, GGPG…LVMA, IPPP…FIML, LTAV…TLWF, VGSF…TGYI, AILL…AIGI, LYID…AIWL, and FFYS…DSFI.

Belongs to the UbiA prenyltransferase family. Protoheme IX farnesyltransferase subfamily. In terms of assembly, interacts with CtaA.

It is found in the cell membrane. It catalyses the reaction heme b + (2E,6E)-farnesyl diphosphate + H2O = Fe(II)-heme o + diphosphate. It participates in porphyrin-containing compound metabolism; heme O biosynthesis; heme O from protoheme: step 1/1. Functionally, converts heme B (protoheme IX) to heme O by substitution of the vinyl group on carbon 2 of heme B porphyrin ring with a hydroxyethyl farnesyl side group. The sequence is that of Protoheme IX farnesyltransferase 1 from Bacillus velezensis (strain DSM 23117 / BGSC 10A6 / LMG 26770 / FZB42) (Bacillus amyloliquefaciens subsp. plantarum).